Consider the following 351-residue polypeptide: Protein MSS2, mitochondrial (351 aa).

2 TPR repeats span residues 155-188 (HLTV…ENST) and 260-294 (KECF…MDLE).

As to quaternary structure, interacts with COX18.

Its subcellular location is the mitochondrion inner membrane. Required to stabilize mitochondrial cytochrome C oxidase subunit 2 (COX2) and to translocate the C-terminal domain of COX2 through the inner membrane. In Saccharomyces cerevisiae (strain ATCC 204508 / S288c) (Baker's yeast), this protein is Protein MSS2, mitochondrial (MSS2).